Here is a 101-residue protein sequence, read N- to C-terminus: Urease subunit gamma (101 aa).

The protein belongs to the urease gamma subunit family. In terms of assembly, heterotrimer of UreA (gamma), UreB (beta) and UreC (alpha) subunits. Three heterotrimers associate to form the active enzyme.

It is found in the cytoplasm. The enzyme catalyses urea + 2 H2O + H(+) = hydrogencarbonate + 2 NH4(+). Its pathway is nitrogen metabolism; urea degradation; CO(2) and NH(3) from urea (urease route): step 1/1. The chain is Urease subunit gamma from Ureaplasma parvum serovar 3 (strain ATCC 27815 / 27 / NCTC 11736).